Reading from the N-terminus, the 157-residue chain is Nascent polypeptide-associated complex subunit beta (157 aa).

Positions 1–28 (MPVDPEKLAKLQKSSAKKVGGSRVKAKK) are disordered. The NAC-A/B domain maps to 33–98 (EQDDTKLIEA…PQEKNITQLI (66 aa)). Residues 124–157 (KTPKDFNTGSANAAADAGGEDIPDLVDQKFDDVE) form a disordered region.

The protein belongs to the NAC-beta family. As to quaternary structure, part of the nascent polypeptide-associated complex (NAC), consisting of EGD2 and EGD1. NAC associates with ribosomes via EGD1.

Its subcellular location is the cytoplasm. The protein resides in the nucleus. In terms of biological role, component of the nascent polypeptide-associated complex (NAC), a dynamic component of the ribosomal exit tunnel, protecting the emerging polypeptides from interaction with other cytoplasmic proteins to ensure appropriate nascent protein targeting. The NAC complex also promotes mitochondrial protein import by enhancing productive ribosome interactions with the outer mitochondrial membrane and blocks the inappropriate interaction of ribosomes translating non-secretory nascent polypeptides with translocation sites in the membrane of the endoplasmic reticulum. EGD1 may act as a transcription factor that exert a negative effect on the expression of several genes that are transcribed by RNA polymerase II. This chain is Nascent polypeptide-associated complex subunit beta (EGD1), found in Candida albicans (strain SC5314 / ATCC MYA-2876) (Yeast).